We begin with the raw amino-acid sequence, 100 residues long: Non-histone chromosomal protein HMG-14 (100 aa).

Residues 1 to 100 (MPKRKVSSAE…EAGEKEAKSD (100 aa)) form a disordered region. Serine 7 carries the ADP-ribosylserine modification. Serine 8 is modified (phosphoserine). An N6-acetyllysine modification is found at lysine 14. Serine 21 carries the post-translational modification Phosphoserine; by RPS6KA5. Serine 25 carries the post-translational modification ADP-ribosylserine; alternate. Serine 25 carries the post-translational modification Phosphoserine; alternate; by RPS6KA5. Lysine 27 carries the post-translational modification N6-acetyllysine. Basic and acidic residues-rich tracts occupy residues 30-50 (AKVE…DKKV) and 69-85 (ETKE…KTEE). A Phosphothreonine modification is found at threonine 81. Lysine 82 carries the N6-acetyllysine modification. Phosphoserine is present on residues serine 86, serine 89, and serine 99.

In terms of assembly, interacts with transcriptional regulator SEHBP. In terms of processing, phosphorylation on Ser-21 and Ser-25 weakens binding to nucleosomes and increases the rate of H3 phosphorylation. Phosphorylation favors cytoplasmic localization.

It is found in the nucleus. Its subcellular location is the cytoplasm. Its function is as follows. Binds to the inner side of the nucleosomal DNA thus altering the interaction between the DNA and the histone octamer. May be involved in the process which maintains transcribable genes in a unique chromatin conformation. Inhibits the phosphorylation of nucleosomal histones H3 and H2A by RPS6KA5/MSK1 and RPS6KA3/RSK2. This is Non-histone chromosomal protein HMG-14 (HMGN1) from Homo sapiens (Human).